The following is a 381-amino-acid chain: (S)-scoulerine 9-O-methyltransferase (381 aa).

S-adenosyl-L-methionine-binding residues include G223, E246, D266, M267, and K280. The Proton acceptor role is filled by H284.

It belongs to the class I-like SAM-binding methyltransferase superfamily. Cation-independent O-methyltransferase family. COMT subfamily.

It carries out the reaction (S)-scoulerine + S-adenosyl-L-methionine = (S)-tetrahydrocolumbamine + S-adenosyl-L-homocysteine + H(+). In terms of biological role, produces a precursor of protoberberine alkaloids. The polypeptide is (S)-scoulerine 9-O-methyltransferase (SMT) (Coptis japonica (Japanese goldthread)).